The primary structure comprises 145 residues: uncharacterized protein (145 aa).

This is an uncharacterized protein from Synechocystis sp. (strain ATCC 27184 / PCC 6803 / Kazusa).